We begin with the raw amino-acid sequence, 222 residues long: E3 ubiquitin-protein ligase RNF138 (222 aa).

Residues Cys-17–Arg-57 form an RING-type zinc finger. Cys-85, Cys-88, His-100, and Cys-104 together coordinate Zn(2+). The C2HC RNF-type zinc finger occupies Cys-85 to Cys-104. 2 C2H2-type zinc fingers span residues Tyr-134–His-157 and Met-164–His-192. In terms of domain architecture, UIM spans Ile-202–Ile-220.

In terms of assembly, interacts with nlk.2 (via C-terminus) and ube2k. Post-translationally, auto-ubiquitinated.

The protein resides in the chromosome. It carries out the reaction S-ubiquitinyl-[E2 ubiquitin-conjugating enzyme]-L-cysteine + [acceptor protein]-L-lysine = [E2 ubiquitin-conjugating enzyme]-L-cysteine + N(6)-ubiquitinyl-[acceptor protein]-L-lysine.. Its pathway is protein modification; protein ubiquitination. In terms of biological role, E3 ubiquitin-protein ligase involved in DNA damage response by promoting DNA resection and homologous recombination. Recruited to sites of double-strand breaks following DNA damage and specifically promotes double-strand break repair via homologous recombination. Together with nlk.2, involved in the ubiquitination and degradation of TCF/LEF. Also exhibits auto-ubiquitination activity in combination with ube2k. May act as a negative regulator in the Wnt/beta-catenin-mediated signaling pathway. The protein is E3 ubiquitin-protein ligase RNF138 (rnf138) of Xenopus laevis (African clawed frog).